The primary structure comprises 134 residues: Small ribosomal subunit protein uS11 (134 aa).

The tract at residues 1–22 (MAQKTRATAARKPRRKVNKNVT) is disordered. Residues 9 to 18 (AARKPRRKVN) are compositionally biased toward basic residues.

It belongs to the universal ribosomal protein uS11 family. In terms of assembly, part of the 30S ribosomal subunit. Interacts with proteins S7 and S18. Binds to IF-3.

Located on the platform of the 30S subunit, it bridges several disparate RNA helices of the 16S rRNA. Forms part of the Shine-Dalgarno cleft in the 70S ribosome. The polypeptide is Small ribosomal subunit protein uS11 (Kocuria rhizophila (strain ATCC 9341 / DSM 348 / NBRC 103217 / DC2201)).